The following is a 67-amino-acid chain: DNA-directed RNA polymerase subunit omega (67 aa).

Belongs to the RNA polymerase subunit omega family. The RNAP catalytic core consists of 2 alpha, 1 beta, 1 beta' and 1 omega subunit. When a sigma factor is associated with the core the holoenzyme is formed, which can initiate transcription.

The enzyme catalyses RNA(n) + a ribonucleoside 5'-triphosphate = RNA(n+1) + diphosphate. Promotes RNA polymerase assembly. Latches the N- and C-terminal regions of the beta' subunit thereby facilitating its interaction with the beta and alpha subunits. The polypeptide is DNA-directed RNA polymerase subunit omega (rpoZ) (Treponema pallidum (strain Nichols)).